Reading from the N-terminus, the 336-residue chain is Inactive serine/threonine-protein kinase BKN2 (336 aa).

A disordered region spans residues 1–25 (MGNCLKPLKEQPPSASPKPLTIPSS). Residue Gly-2 is the site of N-myristoyl glycine attachment. Cys-4 carries the S-palmitoyl cysteine lipid modification. In terms of domain architecture, Protein kinase spans 52 to 332 (YMVIKGNDNG…QVFDGLNDIA (281 aa)).

This sequence belongs to the protein kinase superfamily. Ser/Thr protein kinase family. In terms of assembly, component of an immune signaling complex made of, at least, SZE1, BKN2/SZE2, ZAR1 and ZED1. Interacts directly with ZAR1 and Pseudomonas syringae HOPZ1A at the plasma membrane. N-terminal myristoylation is critical for plasma membrane localization and implication in defense responses. Expressed in stigma and ovaries in flowers, and in stems and seedlings.

Its subcellular location is the cell membrane. In terms of biological role, together with SZE1 and ZED1, required for effector-triggered immunity (e.g. Pseudomonas syringae type III effector HopZ1a) via the activation of ZAR1, thus being essential for resistance against P. syringae pv. tomato DC3000 expressing HopZ1a. Collaboratively with BKN1, involved in compatible pollen-stigma interactions. This chain is Inactive serine/threonine-protein kinase BKN2, found in Arabidopsis thaliana (Mouse-ear cress).